The following is a 550-amino-acid chain: C-type lectin domain family 4 member F (550 aa).

The Cytoplasmic segment spans residues 1–42; the sequence is MKEAELNRDVAKFCTDNQCVILQPQGLGPKSAAPMAPRTLRH. The chain crosses the membrane as a helical; Signal-anchor for type II membrane protein span at residues 43–69; the sequence is VQAIVALVVVTVFFSLLALFVVVLQPW. The Extracellular portion of the chain corresponds to 70-550; that stretch reads RQKQNEDHPV…DWSVARTDQS (481 aa). N-linked (GlcNAc...) asparagine glycosylation is found at N87, N93, N115, N132, N209, and N255. The C-type lectin domain occupies 438-538; the sequence is NFCVSQGAHL…GTAYNWVCKK (101 aa). Intrachain disulfides connect C440/C536 and C516/C528.

In terms of tissue distribution, kupffer cells.

It is found in the membrane. Functionally, receptor with an affinity for galactose and fucose. Could be involved in endocytosis. This chain is C-type lectin domain family 4 member F (Clec4f), found in Rattus norvegicus (Rat).